A 914-amino-acid chain; its full sequence is Protein translocase subunit SecA (914 aa).

Residues Q87, 105-109 (GEGKT), and D508 contribute to the ATP site. Positions 898, 900, 909, and 910 each coordinate Zn(2+).

Belongs to the SecA family. In terms of assembly, monomer and homodimer. Part of the essential Sec protein translocation apparatus which comprises SecA, SecYEG and auxiliary proteins SecDF-YajC and YidC. Zn(2+) serves as cofactor.

Its subcellular location is the cell inner membrane. The protein localises to the cytoplasm. It carries out the reaction ATP + H2O + cellular proteinSide 1 = ADP + phosphate + cellular proteinSide 2.. Part of the Sec protein translocase complex. Interacts with the SecYEG preprotein conducting channel. Has a central role in coupling the hydrolysis of ATP to the transfer of proteins into and across the cell membrane, serving both as a receptor for the preprotein-SecB complex and as an ATP-driven molecular motor driving the stepwise translocation of polypeptide chains across the membrane. The sequence is that of Protein translocase subunit SecA from Xylella fastidiosa (strain M12).